A 419-amino-acid polypeptide reads, in one-letter code: MVTLVLGAQFGDEGKGKITDLLSQTADLCCRSAGGHNAGHTIIHDNITYDFHILPSGLISPKCVNLIGSGTVVHVPSFFKELKALEEKGLKDANKRVFISDRAHVCFDLHSVVDGLEEASLGGRKVGTTGKGIGPCYSDKASRTGVRIGEVLDEGIVERKLRNLEAGYRRRFGDLTYDLEEEIKRFKEYRTLLKPFVVDQFTLLRKYKDASILIEGANALMLDIDHGTYPYVTSSCTGLGGTIQSLCLNPTEIKSIVGVVKAYSTRVGSGPFPSEQINEIGEKLQVTGREFGVTTGRKRRCGWLDLVMCRYSTLINHYTALNLTKLDILDDFDEIKVAVAYRLNGKEVESFPADAEELEKVEVVYETLPGWKVNTMGATKWEDLPPNAQKYIEYIEKDLGVPVRWIGTGPARSHMIERL.

GTP-binding positions include 11–17 and 39–41; these read GDEGKGK and GHT. The active-site Proton acceptor is Asp-12. The Mg(2+) site is built by Asp-12 and Gly-39. IMP-binding positions include 12–15, 37–40, Thr-129, Arg-143, Asn-218, Thr-233, and Arg-297; these read DEGK and NAGH. The Proton donor role is filled by His-40. Residue 293–299 participates in substrate binding; the sequence is VTTGRKR. Residues Arg-299, 325 to 327, and 407 to 409 each bind GTP; these read KLD and GTG.

It belongs to the adenylosuccinate synthetase family. Homodimer. Mg(2+) serves as cofactor.

It is found in the cytoplasm. The enzyme catalyses IMP + L-aspartate + GTP = N(6)-(1,2-dicarboxyethyl)-AMP + GDP + phosphate + 2 H(+). The protein operates within purine metabolism; AMP biosynthesis via de novo pathway; AMP from IMP: step 1/2. Plays an important role in the de novo pathway and in the salvage pathway of purine nucleotide biosynthesis. Catalyzes the first committed step in the biosynthesis of AMP from IMP. This chain is Adenylosuccinate synthetase, found in Coccidioides posadasii (strain C735) (Valley fever fungus).